The following is a 336-amino-acid chain: Homeobox-leucine zipper protein HAT14 (336 aa).

Disordered stretches follow at residues 53-141 (RSLS…PDSV) and 160-194 (SNKRDIDDEVERSASRASNEDNDDENGSTRKKLRL). Residues 64–81 (EDEKKKPAPRAKKSDEFR) show a composition bias toward basic and acidic residues. Over residues 120–129 (VEEEEEEEEA) the composition is skewed to acidic residues. Over residues 130–141 (VPSMSVSPPDSV) the composition is skewed to low complexity. Basic and acidic residues predominate over residues 160 to 173 (SNKRDIDDEVERSA). Positions 187–246 (STRKKLRLSKDQSAFLEDSFKEHSTLNPKQKIALAKQLNLRPRQVEVWFQNRRARTKLKQ) form a DNA-binding region, homeobox. The tract at residues 254–275 (LKRCCESLTEENRRLQKEVKEL) is leucine-zipper.

This sequence belongs to the HD-ZIP homeobox family. Class II subfamily.

It is found in the nucleus. Its function is as follows. Probable transcription factor. In Arabidopsis thaliana (Mouse-ear cress), this protein is Homeobox-leucine zipper protein HAT14 (HAT14).